We begin with the raw amino-acid sequence, 224 residues long: Cytochrome c oxidase subunit 2 (224 aa).

Topologically, residues 1-26 are mitochondrial intermembrane; the sequence is MSTWGQINLMDPASPIQMEMMLFHDH. Residues 27–48 traverse the membrane as a helical segment; sequence AMAILIGIFTLVSLLGVKLCFN. Residues 49 to 62 are Mitochondrial matrix-facing; that stretch reads TLSTRTMHEAQLLE. The helical transmembrane segment at 63 to 82 threads the bilayer; it reads TLWTILPAFLLVWLALPSLR. The Mitochondrial intermembrane segment spans residues 83 to 224; sequence LLYLLDEQGS…DVKDFIKMCN (142 aa). Histidine 161, cysteine 196, glutamate 198, cysteine 200, histidine 204, and methionine 207 together coordinate Cu cation. Residue glutamate 198 coordinates Mg(2+).

It belongs to the cytochrome c oxidase subunit 2 family. Component of the cytochrome c oxidase (complex IV, CIV), a multisubunit enzyme composed of a catalytic core of 3 subunits and several supernumerary subunits. The complex exists as a monomer or a dimer and forms supercomplexes (SCs) in the inner mitochondrial membrane with ubiquinol-cytochrome c oxidoreductase (cytochrome b-c1 complex, complex III, CIII). The cofactor is Cu cation.

It is found in the mitochondrion inner membrane. The enzyme catalyses 4 Fe(II)-[cytochrome c] + O2 + 8 H(+)(in) = 4 Fe(III)-[cytochrome c] + 2 H2O + 4 H(+)(out). Component of the cytochrome c oxidase, the last enzyme in the mitochondrial electron transport chain which drives oxidative phosphorylation. The respiratory chain contains 3 multisubunit complexes succinate dehydrogenase (complex II, CII), ubiquinol-cytochrome c oxidoreductase (cytochrome b-c1 complex, complex III, CIII) and cytochrome c oxidase (complex IV, CIV), that cooperate to transfer electrons derived from NADH and succinate to molecular oxygen, creating an electrochemical gradient over the inner membrane that drives transmembrane transport and the ATP synthase. Cytochrome c oxidase is the component of the respiratory chain that catalyzes the reduction of oxygen to water. Electrons originating from reduced cytochrome c in the intermembrane space (IMS) are transferred via the dinuclear copper A center (CU(A)) of subunit 2 and heme A of subunit 1 to the active site in subunit 1, a binuclear center (BNC) formed by heme A3 and copper B (CU(B)). The BNC reduces molecular oxygen to 2 water molecules using 4 electrons from cytochrome c in the IMS and 4 protons from the mitochondrial matrix. The chain is Cytochrome c oxidase subunit 2 (COII) from Albinaria caerulea (Land snail).